A 313-amino-acid chain; its full sequence is Protein-methionine-sulfoxide reductase catalytic subunit MsrP (313 aa).

The segment at residues 1 to 44 (MARWRPDMAEREATPEALYLRRRDFLALGAAGAVGLLLPRGARA) is a signal peptide (tat-type signal). Residues Asn-76, 79-80 (YE), Cys-134, Thr-169, Asn-217, Arg-222, and 233-235 (GAK) each bind Mo-molybdopterin.

This sequence belongs to the MsrP family. Heterodimer of a catalytic subunit (MsrP) and a heme-binding subunit (MsrQ). The cofactor is Mo-molybdopterin. Predicted to be exported by the Tat system. The position of the signal peptide cleavage has not been experimentally proven.

The protein resides in the periplasm. It catalyses the reaction L-methionyl-[protein] + a quinone + H2O = L-methionyl-(S)-S-oxide-[protein] + a quinol. The enzyme catalyses L-methionyl-[protein] + a quinone + H2O = L-methionyl-(R)-S-oxide-[protein] + a quinol. Its function is as follows. Part of the MsrPQ system that repairs oxidized periplasmic proteins containing methionine sulfoxide residues (Met-O), using respiratory chain electrons. Thus protects these proteins from oxidative-stress damage caused by reactive species of oxygen and chlorine generated by the host defense mechanisms. MsrPQ is essential for the maintenance of envelope integrity under bleach stress, rescuing a wide series of structurally unrelated periplasmic proteins from methionine oxidation. The catalytic subunit MsrP is non-stereospecific, being able to reduce both (R-) and (S-) diastereoisomers of methionine sulfoxide. This is Protein-methionine-sulfoxide reductase catalytic subunit MsrP from Anaeromyxobacter dehalogenans (strain 2CP-1 / ATCC BAA-258).